The chain runs to 445 residues: Glycine--tRNA ligase (445 aa).

The substrate site is built by Arg-97 and Glu-145. Residues 177–179, 187–192, 262–263, and 308–311 each bind ATP; these read RNE, FRTCEF, EV, and GLTR. A substrate-binding site is contributed by 192 to 196; sequence FEQME. Residue 304-308 participates in substrate binding; the sequence is ETSAG.

This sequence belongs to the class-II aminoacyl-tRNA synthetase family. Homodimer.

It is found in the cytoplasm. The enzyme catalyses tRNA(Gly) + glycine + ATP = glycyl-tRNA(Gly) + AMP + diphosphate. Its function is as follows. Catalyzes the attachment of glycine to tRNA(Gly). The polypeptide is Glycine--tRNA ligase (Borreliella burgdorferi (strain ATCC 35210 / DSM 4680 / CIP 102532 / B31) (Borrelia burgdorferi)).